Here is a 477-residue protein sequence, read N- to C-terminus: Protoporphyrinogen oxidase (477 aa).

Residues 9 to 14 (GGGISG), tryptophan 42, 57 to 60 (GPRG), valine 257, alanine 449, and 454 to 456 (VAV) contribute to the FAD site.

It belongs to the protoporphyrinogen/coproporphyrinogen oxidase family. Protoporphyrinogen oxidase subfamily. As to quaternary structure, monomer. Homodimer. It depends on FAD as a cofactor.

It is found in the mitochondrion inner membrane. The catalysed reaction is protoporphyrinogen IX + 3 O2 = protoporphyrin IX + 3 H2O2. The protein operates within porphyrin-containing compound metabolism; protoporphyrin-IX biosynthesis; protoporphyrin-IX from protoporphyrinogen-IX: step 1/1. Its activity is regulated as follows. Inhibited by acifluorfen. Its function is as follows. Catalyzes the 6-electron oxidation of protoporphyrinogen-IX to form protoporphyrin-IX. This Mus musculus (Mouse) protein is Protoporphyrinogen oxidase (Ppox).